The following is a 584-amino-acid chain: BEL1-like homeodomain protein 8 (584 aa).

The interval 266 to 282 is SR/KY domain; the sequence is SRFLEPAQKMLEEFCIS. The tract at residues 292–317 is disordered; that stretch reads ESTSMEDDDDDDDNLSGFSSSSEPLE. Positions 295 to 305 are enriched in acidic residues; that stretch reads SMEDDDDDDDN. Positions 316 to 387 are BELL domain; that stretch reads LEPKNRLKKA…ALRTAIAEHV (72 aa). The segment at residues 424–486 is a DNA-binding region (homeobox); the sequence is IWRPQRGLPE…NARVRLWKPM (63 aa). The segment at 503 to 529 is disordered; the sequence is TSHNIEPSNRPNTVSSPSHEQTLTGLS.

It belongs to the TALE/BELL homeobox family. May form heterodimeric complex with the TALE/KNOX proteins STM and KNAT1/BP.

It localises to the nucleus. Its function is as follows. Required for specifying floral primordia and establishing early internode patterning events during inflorescence development. This Arabidopsis thaliana (Mouse-ear cress) protein is BEL1-like homeodomain protein 8 (BLH8).